The sequence spans 65 residues: Large ribosomal subunit protein bL35 (65 aa).

The segment at Met1 to Ser46 is disordered. The span at Ala25–Arg45 shows a compositional bias: basic residues.

This sequence belongs to the bacterial ribosomal protein bL35 family.

The polypeptide is Large ribosomal subunit protein bL35 (Thioalkalivibrio sulfidiphilus (strain HL-EbGR7)).